Consider the following 271-residue polypeptide: Proteasome inhibitor PI31 subunit (271 aa).

Ala-2 bears the N-acetylalanine mark. The tract at residues 2 to 150 is important for homodimerization and interaction with FBXO7; it reads AGLEVLFASA…PIHEQWEKAR (149 aa). Phosphoserine occurs at positions 153 and 189. An Omega-N-methylarginine modification is found at Arg-205. Residue Arg-219 is modified to Asymmetric dimethylarginine. The disordered stretch occupies residues 226–271; sequence SGLPNRLPPGAVPPGARFDPFGPIGTSPSGPNPDHLPPPGYDDMYL. An Omega-N-methylarginine modification is found at Arg-231. Ser-252 is modified (phosphoserine). A compositionally biased stretch (pro residues) spans 255–265; that stretch reads GPNPDHLPPPG.

The protein belongs to the proteasome inhibitor PI31 family. As to quaternary structure, monomer and homodimer. Interacts with FBXO7.

The protein resides in the cytoplasm. It is found in the endoplasmic reticulum. Functionally, plays an important role in control of proteasome function. Inhibits the hydrolysis of protein and peptide substrates by the 20S proteasome. Also inhibits the activation of the proteasome by the proteasome regulatory proteins PA700 and PA28. The polypeptide is Proteasome inhibitor PI31 subunit (Psmf1) (Mus musculus (Mouse)).